A 118-amino-acid polypeptide reads, in one-letter code: Holo-[acyl-carrier-protein] synthase (118 aa).

2 residues coordinate Mg(2+): aspartate 6 and glutamate 55.

The protein belongs to the P-Pant transferase superfamily. AcpS family. The cofactor is Mg(2+).

The protein localises to the cytoplasm. The enzyme catalyses apo-[ACP] + CoA = holo-[ACP] + adenosine 3',5'-bisphosphate + H(+). Its function is as follows. Transfers the 4'-phosphopantetheine moiety from coenzyme A to a Ser of acyl-carrier-protein. This is Holo-[acyl-carrier-protein] synthase from Chlorobium chlorochromatii (strain CaD3).